The chain runs to 643 residues: Complement component C1q receptor (643 aa).

Residues 1-23 form the signal peptide; it reads MVTSTGLLLLLGLLGQLWAGAAA. Topologically, residues 24–571 are extracellular; sequence DSEAVVCEGT…HSDSDTDGQK (548 aa). The C-type lectin domain maps to 31–173; it reads EGTACYTAHW…CGTPDAPGNS (143 aa). 16 disulfide bridges follow: cysteine 140-cysteine 164, cysteine 261-cysteine 272, cysteine 268-cysteine 282, cysteine 284-cysteine 297, cysteine 303-cysteine 314, cysteine 308-cysteine 325, cysteine 327-cysteine 340, cysteine 346-cysteine 355, cysteine 351-cysteine 364, cysteine 366-cysteine 380, cysteine 386-cysteine 397, cysteine 393-cysteine 406, cysteine 408-cysteine 422, cysteine 428-cysteine 437, cysteine 433-cysteine 446, and cysteine 448-cysteine 461. EGF-like domains lie at 257 to 298 and 299 to 341; these read PKFG…VTCA and SRNP…VHCV. Asparagine 322 carries an N-linked (GlcNAc...) asparagine glycan. Residues 342-381 enclose the EGF-like 3; calcium-binding domain; that stretch reads DIDECEDSPCDQECINTPGGFHCECWVGYQSSGSKEEACE. The EGF-like 4; calcium-binding domain occupies 382-423; it reads DVDECTAAYSPCAQGCTNTDGSFYCSCKEGYIMSGEDSTQCE. One can recognise an EGF-like 5; calcium-binding domain in the interval 424–462; sequence DIDECLGNPCDTLCINTDGSFRCGCPAGFELAPNGVSCT. Positions 469-517 are disordered; it reads ELPARPPQKEDKGDGKESTVPLTEMPGSLNGSKDVSNRAQTTDLSIQSD. Residues 475–485 are compositionally biased toward basic and acidic residues; that stretch reads PQKEDKGDGKE. Over residues 497 to 517 the composition is skewed to polar residues; sequence LNGSKDVSNRAQTTDLSIQSD. Asparagine 498 carries an N-linked (GlcNAc...) asparagine glycan. Residues 572–592 traverse the membrane as a helical segment; it reads LLLFYILGTVVAISLLLALAL. Residues 593–643 are Cytoplasmic-facing; that stretch reads GLLIYLKRKAKKEEIKEKKAQNAADSYSWIPERAESRAPENQYSPTPGTDC. Positions 606 to 643 are disordered; that stretch reads EIKEKKAQNAADSYSWIPERAESRAPENQYSPTPGTDC. At serine 618 the chain carries Phosphoserine. A phosphotyrosine mark is found at tyrosine 619 and tyrosine 635. The span at 631-643 shows a compositional bias: polar residues; sequence PENQYSPTPGTDC.

As to quaternary structure, homodimer. Interacts with C1QBP; the association may represent a cell surface C1q receptor. Interacts with surfactant protein A/SFTPA1. Interacts with multimerin-2/MMRN2. Interacts with DAG1; this interaction plays an important role in endothelial cell migration. Interacts with CBL. Interacts with IGFBP7. Interacts with VEGFR2. N- and O-glycosylated. Post-translationally, phosphorylated on Tyr-619 and Tyr-635 by SRC; these phosphorylations promote endothelial cell adhesion and migration. In terms of tissue distribution, widely expressed. Highly expressed in lung and heart. Expressed at lower level in brain, thymus, liver, spleen, intestine, kidney, adrenal gland, muscle and testis. Expressed on endothelial cells, platelets, undifferentiated monocytes and circulating natural killer cells.

It localises to the cell membrane. Its function is as follows. Cell surface receptor that plays a role in various physiological processes including inflammation, phagocytosis, and cell adhesion. Plays a role in phagocytosis and enhances the uptake of apoptotic cells and immune complexes by acting as a receptor for defense collagens including surfactant protein A/SFTPA1, C1q, and mannose-binding lectin (MBL2). Plays a role in the regulation of endothelial cell function and adhesion by activating angiogenesis. Mechanistically, exerts its angiogenic function by associating with beta-dystroglycan, leading to SRC-dependent phosphorylation and subsequent recruitment of CBL. In turn, CBL provides a docking site for downstream signaling components, such as CRKL to enhance cell migration. Participates in angiogenesis also by acting as a receptor for the ECM pan-endothelial glycoprotein multimerin-2/MMRN2 and IGFBP7 ligands. Both ligands play a non-redundant role in CD93-mediated endothelial cell function. Acts as a key regulator of endothelial barrier function through modulating VEGFR2 function. The protein is Complement component C1q receptor (Cd93) of Rattus norvegicus (Rat).